We begin with the raw amino-acid sequence, 150 residues long: UPF0178 protein Bpet3884 (150 aa).

It belongs to the UPF0178 family.

This is UPF0178 protein Bpet3884 from Bordetella petrii (strain ATCC BAA-461 / DSM 12804 / CCUG 43448).